Here is a 352-residue protein sequence, read N- to C-terminus: MQELRLVLIIVGALAISALLLHGLWTSRKEKPAKFGEKPLGKLDDSNRDTEGFDHTGVGSVRIINNAPEKDVAVHTSQRKEPELHFGEKIHADPLMDSPASVQVIDDMADLPRMSATSEKIEPKFSSDSVVPDPVATAVEEEPVRIAVEQPIQSEPASVVSDYTEVLNTPISDIPEVSEQEVKPEENKVLEPEPVIANVVPEPEPEPEPEPEPVLAPSYIALSVHARNGEMLQGAKLFQCLEQHNLIFGENAVYHRHADLAGTEPVLFSATNMVQPGNFPEDGGYNFETPGVSFYLMLPCYGSAKNNFNLMLQTVQRIADDLNADVLDHERAMVTPNRIAQYREKAKLYSQA.

Residues 1–5 (MQELR) are Periplasmic-facing. Residues 6 to 26 (LVLIIVGALAISALLLHGLWT) traverse the membrane as a helical segment. Topologically, residues 27–352 (SRKEKPAKFG…REKAKLYSQA (326 aa)) are cytoplasmic. The segment covering 35 to 54 (FGEKPLGKLDDSNRDTEGFD) has biased composition (basic and acidic residues). The interval 35 to 56 (FGEKPLGKLDDSNRDTEGFDHT) is disordered.

It belongs to the ZipA family. As to quaternary structure, interacts with FtsZ via their C-terminal domains.

It localises to the cell inner membrane. Functionally, essential cell division protein that stabilizes the FtsZ protofilaments by cross-linking them and that serves as a cytoplasmic membrane anchor for the Z ring. Also required for the recruitment to the septal ring of downstream cell division proteins. This Photobacterium profundum (strain SS9) protein is Cell division protein ZipA.